The primary structure comprises 384 residues: MTNLIKNVKDAFNSVLSYAPTHILQAPGRVNLIGEHTDYNDGFVLPCAINYQTVVAAAKRDDNIVRVVSVDYGNETDEFDITQEITFQENKMWSNYIRGVVKCLIGRGYEFKGADISVSGNVPQGAGLSSSAALEVVIGQTFKELYNLDISQAEIALNGQQAENEFVGCNCGIMDQMISAEGNENHAMLLDCRSLETTAVSMPEDMSVVIINSNKKRGLVDSEYNTRREQCEEAARIFGVKALRDVTIEEFNAKAHELDEMVAKRARHVITENDRTEEAAKVLASGDMKRMAVLMAESHASMRDDFEITVSEVDTLVDIVKNVIGAEGGVRMTGGGFGGCIVALVPPMLVDEVKAAVEELYEAKTGLKESIYVCQATNGAGLVL.

Substrate is bound at residue Glu-35–Asp-38. ATP-binding positions include Ser-69 and Gly-125–Ser-131. Residues Ser-131 and Glu-163 each contribute to the Mg(2+) site. Catalysis depends on Asp-175, which acts as the Proton acceptor. Residue Tyr-224 participates in substrate binding.

It belongs to the GHMP kinase family. GalK subfamily.

It is found in the cytoplasm. The enzyme catalyses alpha-D-galactose + ATP = alpha-D-galactose 1-phosphate + ADP + H(+). It participates in carbohydrate metabolism; galactose metabolism. Catalyzes the transfer of the gamma-phosphate of ATP to D-galactose to form alpha-D-galactose-1-phosphate (Gal-1-P). This chain is Galactokinase, found in Aliivibrio fischeri (strain MJ11) (Vibrio fischeri).